An 84-amino-acid chain; its full sequence is Metallothionein type 2b (84 aa).

The protein belongs to the metallothionein superfamily. Type 15 family. As to expression, expressed in leaves, stems and roots.

The protein localises to the cytoplasm. The protein resides in the nucleus. Metallothioneins have a high content of cysteine residues that bind various heavy metals. Probably involved in maintaining homeostasis of essential transition metals and detoxification of toxic metals. Increases cadmium and zinc tolerance when expressed in heterologous systems. Metal chelator binding 6 cadmium or 5 zinc atoms per protein. The chain is Metallothionein type 2b from Colocasia esculenta (Wild taro).